The sequence spans 456 residues: UDP-N-acetylmuramate--L-alanine ligase (456 aa).

112–118 contacts ATP; it reads GTHGKTT.

Belongs to the MurCDEF family.

Its subcellular location is the cytoplasm. The catalysed reaction is UDP-N-acetyl-alpha-D-muramate + L-alanine + ATP = UDP-N-acetyl-alpha-D-muramoyl-L-alanine + ADP + phosphate + H(+). The protein operates within cell wall biogenesis; peptidoglycan biosynthesis. Cell wall formation. The protein is UDP-N-acetylmuramate--L-alanine ligase of Trichlorobacter lovleyi (strain ATCC BAA-1151 / DSM 17278 / SZ) (Geobacter lovleyi).